A 113-amino-acid chain; its full sequence is Cell cycle protein GpsB (113 aa).

Residues 36 to 68 (LDMVIKDYSTFTQEIEALQAENIRLVQELDNAP) are a coiled coil.

This sequence belongs to the GpsB family. As to quaternary structure, forms polymers through the coiled coil domains. Interacts with PBP1, MreC and EzrA.

The protein localises to the cytoplasm. Its function is as follows. Divisome component that associates with the complex late in its assembly, after the Z-ring is formed, and is dependent on DivIC and PBP2B for its recruitment to the divisome. Together with EzrA, is a key component of the system that regulates PBP1 localization during cell cycle progression. Its main role could be the removal of PBP1 from the cell pole after pole maturation is completed. Also contributes to the recruitment of PBP1 to the division complex. Not essential for septum formation. This chain is Cell cycle protein GpsB, found in Listeria innocua serovar 6a (strain ATCC BAA-680 / CLIP 11262).